Here is a 514-residue protein sequence, read N- to C-terminus: FAD-dependent monooxygenase CPUR_05423 (514 aa).

Residues Val79 and Arg146 each contribute to the FAD site. The active site involves Arg227. The FAD site is built by Asp358 and Gly371.

Belongs to the paxM FAD-dependent monooxygenase family. It depends on FAD as a cofactor.

Its pathway is pigment biosynthesis. Functionally, FAD-dependent monooxygenase; part of the ergochrome gene cluster responsible for the typical purple-black color of the ergot sclerotia. The ergochrome gene cluster produces several ergot pigments including the yellow ergochrome secalonic acid and its derivatives, as well as the red anthraquinones endocrocin and clavorubin. The pathway begins with the synthesis of atrochrysone thioester by the polyketide synthase (PKS) CPUR_05437. The atrochrysone carboxyl ACP thioesterase CPUR_05436 then breaks the thioester bond and releases the atrochrysone carboxylic acid from CPUR_05437. The atrochrysone carboxylic acid is then converted to atrochrysone which is further transformed into emodin anthrone. The next step is performed by the anthrone oxygenase CPUR_05434 that catalyzes the oxidation of emodinanthrone to emodin. Emodin is further modified to yield monodictyphenone via several steps involving CPUR_05427, CPUR_05428, CPUR_05429 and CPUR_05430. The short chain dehydrogenase/reductase CPUR_05418 then catalyzes the C-5 ketoreduction to give the xanthone skeleton of the monomeric units. Ergochromes formation requires further dimerization steps of different xanthone units, probably catalyzed by the cytochrome P450 monooxygenase CPUR_05419. CPUR_05425, CPUR_05426 and CPUR_05431 are unique to Claviceps, thus it is likely that they are involved in further modification of xanthone units or in their dimerization. The yellow ergochromes and the red anthraquinone pigments endocrocin and clavorubin are products from the same PKS derived precursors and the latter are likely shunt products in the pathway of xanthone biosynthesis. It is proposed that atrochrysone carboxylic acid released from the PKS CPUR_05437 can also be converted to endocrocin anthrone which is further oxidized into endocrocin by CPUR_05435. Endocrocin could be then modified to clavorubin, possibly by CPUR_05423 and CPUR_05431. Clavorubin is the principal anthraquinone metabolite produced by the cluster with a much higher yield compared to endocrocin. This is FAD-dependent monooxygenase CPUR_05423 from Claviceps purpurea (strain 20.1) (Ergot fungus).